A 359-amino-acid chain; its full sequence is DNA polymerase IV (359 aa).

One can recognise a UmuC domain in the interval 4–184; that stretch reads IVHVDMDAFY…LPVNRIPGVG (181 aa). 2 residues coordinate Mg(2+): Asp8 and Asp102. Residue Glu103 is part of the active site.

It belongs to the DNA polymerase type-Y family. Monomer. The cofactor is Mg(2+).

It is found in the cytoplasm. It carries out the reaction DNA(n) + a 2'-deoxyribonucleoside 5'-triphosphate = DNA(n+1) + diphosphate. Functionally, poorly processive, error-prone DNA polymerase involved in untargeted mutagenesis. Copies undamaged DNA at stalled replication forks, which arise in vivo from mismatched or misaligned primer ends. These misaligned primers can be extended by PolIV. Exhibits no 3'-5' exonuclease (proofreading) activity. May be involved in translesional synthesis, in conjunction with the beta clamp from PolIII. This is DNA polymerase IV from Xanthomonas campestris pv. campestris (strain 8004).